A 111-amino-acid polypeptide reads, in one-letter code: UPF0060 membrane protein XCC2880 (111 aa).

4 helical membrane passes run 8-28, 34-54, 62-82, and 91-111; these read LLLF…PYLW, SVWL…LLTL, VYAA…WWVD, and LLGA…PRSG.

This sequence belongs to the UPF0060 family.

It is found in the cell inner membrane. The sequence is that of UPF0060 membrane protein XCC2880 from Xanthomonas campestris pv. campestris (strain ATCC 33913 / DSM 3586 / NCPPB 528 / LMG 568 / P 25).